The chain runs to 152 residues: Xanthine-guanine phosphoribosyltransferase (152 aa).

5-phospho-alpha-D-ribose 1-diphosphate is bound by residues 37 to 38 (RG), Arg-69, and 88 to 96 (DDLVDTGGT). Residue Arg-69 participates in GMP binding. Asp-89 contributes to the Mg(2+) binding site. The guanine site is built by Asp-92 and Ile-135. Xanthine contacts are provided by Asp-92 and Ile-135. GMP-binding positions include 92 to 96 (DTGGT) and 134 to 135 (WI).

It belongs to the purine/pyrimidine phosphoribosyltransferase family. XGPT subfamily. As to quaternary structure, homotetramer. Mg(2+) is required as a cofactor.

The protein localises to the cell inner membrane. The enzyme catalyses GMP + diphosphate = guanine + 5-phospho-alpha-D-ribose 1-diphosphate. It catalyses the reaction XMP + diphosphate = xanthine + 5-phospho-alpha-D-ribose 1-diphosphate. The catalysed reaction is IMP + diphosphate = hypoxanthine + 5-phospho-alpha-D-ribose 1-diphosphate. It participates in purine metabolism; GMP biosynthesis via salvage pathway; GMP from guanine: step 1/1. Its pathway is purine metabolism; XMP biosynthesis via salvage pathway; XMP from xanthine: step 1/1. Functionally, purine salvage pathway enzyme that catalyzes the transfer of the ribosyl-5-phosphate group from 5-phospho-alpha-D-ribose 1-diphosphate (PRPP) to the N9 position of the 6-oxopurines guanine and xanthine to form the corresponding ribonucleotides GMP (guanosine 5'-monophosphate) and XMP (xanthosine 5'-monophosphate), with the release of PPi. To a lesser extent, also acts on hypoxanthine. This chain is Xanthine-guanine phosphoribosyltransferase, found in Klebsiella pneumoniae (strain 342).